A 71-amino-acid polypeptide reads, in one-letter code: ATP synthase subunit c 1 (71 aa).

Helical transmembrane passes span 4–24 (FIGA…VGHV) and 46–66 (LFVG…IALL).

This sequence belongs to the ATPase C chain family. F-type ATPases have 2 components, F(1) - the catalytic core - and F(0) - the membrane proton channel. F(1) has five subunits: alpha(3), beta(3), gamma(1), delta(1), epsilon(1). F(0) has four main subunits: a(1), b(1), b'(1) and c(10-14). The alpha and beta chains form an alternating ring which encloses part of the gamma chain. F(1) is attached to F(0) by a central stalk formed by the gamma and epsilon chains, while a peripheral stalk is formed by the delta, b and b' chains.

It is found in the cell inner membrane. Functionally, f(1)F(0) ATP synthase produces ATP from ADP in the presence of a proton or sodium gradient. F-type ATPases consist of two structural domains, F(1) containing the extramembraneous catalytic core and F(0) containing the membrane proton channel, linked together by a central stalk and a peripheral stalk. During catalysis, ATP synthesis in the catalytic domain of F(1) is coupled via a rotary mechanism of the central stalk subunits to proton translocation. Key component of the F(0) channel; it plays a direct role in translocation across the membrane. A homomeric c-ring of between 10-14 subunits forms the central stalk rotor element with the F(1) delta and epsilon subunits. This chain is ATP synthase subunit c 1, found in Cereibacter sphaeroides (strain ATCC 17029 / ATH 2.4.9) (Rhodobacter sphaeroides).